An 85-amino-acid polypeptide reads, in one-letter code: Large ribosomal subunit protein bL27 (85 aa).

The disordered stretch occupies residues 1-21 (MAHKKAGGSSRNGRDSEAKRL).

The protein belongs to the bacterial ribosomal protein bL27 family.

The sequence is that of Large ribosomal subunit protein bL27 from Aeromonas hydrophila subsp. hydrophila (strain ATCC 7966 / DSM 30187 / BCRC 13018 / CCUG 14551 / JCM 1027 / KCTC 2358 / NCIMB 9240 / NCTC 8049).